Consider the following 969-residue polypeptide: Alanine--tRNA ligase (969 aa).

A mitochondrion-targeting transit peptide spans Met-1–Arg-8. Residues His-616, His-620, Cys-735, and His-739 each contribute to the Zn(2+) site.

The protein belongs to the class-II aminoacyl-tRNA synthetase family. In terms of assembly, monomer. Zn(2+) is required as a cofactor.

The protein localises to the mitochondrion. Its subcellular location is the cytoplasm. The enzyme catalyses tRNA(Ala) + L-alanine + ATP = L-alanyl-tRNA(Ala) + AMP + diphosphate. Catalyzes the attachment of alanine to tRNA(Ala) in a two-step reaction: alanine is first activated by ATP to form Ala-AMP and then transferred to the acceptor end of tRNA(Ala). Also edits incorrectly charged tRNA(Ala) via its editing domain. The chain is Alanine--tRNA ligase from Candida albicans (strain SC5314 / ATCC MYA-2876) (Yeast).